The primary structure comprises 1262 residues: Synaptopodin-2 (1262 aa).

An interaction with VPS18 region spans residues 1–174 (MGTGDFICIS…PGSQEGHLVE (174 aa)). The PDZ domain occupies 6 to 88 (FICISMTGGA…SLHLLIKRPT (83 aa)). 2 stretches are compositionally biased toward polar residues: residues 89-105 (SGTS…TNHQ) and 246-260 (TSLT…SSGR). Disordered regions lie at residues 89 to 114 (SGTS…GPME) and 239 to 276 (PAPE…TGLP). Serine 304, serine 323, and serine 324 each carry phosphoserine. Positions 323-363 (SSEGTEQGEDQRSGKDQGRPHKHRARHARLRRSESLSEKQV) are disordered. A Phosphothreonine modification is found at threonine 327. Residues 331 to 341 (EDQRSGKDQGR) are compositionally biased toward basic and acidic residues. Basic residues predominate over residues 342–352 (PHKHRARHARL). The segment covering 353–363 (RRSESLSEKQV) has biased composition (basic and acidic residues). A Nuclear localization signal motif is present at residues 392 to 400 (KKRRRRARK). 3 interaction with ACTN2 regions span residues 477 to 658 (MEML…FYDS), 659 to 922 (SEQI…PPVA), and 899 to 1153 (QSPT…NIEE). Disordered regions lie at residues 503–576 (AQNE…GPQR) and 592–703 (NQTA…SPNP). 5 positions are modified to phosphoserine: serine 518, serine 543, serine 544, serine 546, and serine 549. F-actin binding regions lie at residues 530 to 658 (TSYQ…FYDS) and 659 to 801 (SEQI…VTAV). Residues 540–552 (RMQSSVSESSFQM) are compositionally biased toward low complexity. The segment at 554-560 (RSLGSVP) is interaction with YWHAB. Serine 558 carries the post-translational modification Phosphoserine; by PKA. Polar residues-rich tracts occupy residues 558–569 (SVPQQNGFSGVS) and 592–606 (NQTA…SVTS). Serine 599 carries the post-translational modification Phosphoserine. The tract at residues 602-809 (QSVTSPIPDF…AVSSIKIAQP (208 aa)) is interaction with YWHAB. A Phosphothreonine; by PKA and CaMK2 modification is found at threonine 605. Serine 606 carries the post-translational modification Phosphoserine. Pro residues-rich tracts occupy residues 609-625 (PDFP…PPPE) and 639-650 (AQPPPWPQPAPW). The segment at 610–621 (DFPAPPPYSAVS) is interaction with BAG3. The PPPY motif motif lies at 614 to 617 (PPPY). Tyrosine 617 carries the post-translational modification Phosphotyrosine. Serine 621 bears the Phosphoserine mark. The segment at 659–914 (SEQIASRDER…LPASWKYSSN (256 aa)) is F-actin bundling activity. Phosphoserine is present on residues serine 700 and serine 724. Disordered stretches follow at residues 741 to 799 (MQSS…PQVT) and 833 to 868 (VVSH…GMSG). Residues 745-898 (AKQKTPPPVA…DTVQAHTVRA (154 aa)) form an actin binding region. Position 749 is a phosphothreonine (threonine 749). A compositionally biased stretch (low complexity) spans 756–782 (KPAVKTSSSSQPVAPVSPVWSPGVAPA). 2 positions are modified to phosphoserine: serine 772 and serine 776. Residues 786–799 (AFSTTNPPNPPQVT) show a composition bias toward polar residues. Residues 808 to 1153 (QPTCPPARPA…EAFRPRNIEE (346 aa)) are interaction with FLNC. A phosphoserine mark is found at serine 900, serine 904, and serine 908. The interval 933-957 (LAAIKSQPPGAQASKTSKKKGKKPL) is disordered. The tract at residues 999-1018 (PAMKQALPPRQADIGSPTNA) is interaction with ZYX. A phosphoserine mark is found at serine 1014, serine 1055, and serine 1090.

This sequence belongs to the synaptopodin family. As to quaternary structure, may self-associate in muscle cells under oxidative stress. Binds F-actin. Interacts with ACTN2; ACTN2 is proposed to anchor SYOP2 at Z lines in mature myocytes. Interacts with AKAP6, PPP3CA and CAMK2A. Interacts (phosphorylated form) with YWHAB; YWHAB competes with ACTN2 for interaction with SYNPO2. Interacts with KPNA2; mediating nuclear import of SYNOP2; dependent on interaction with YWHAB. Interacts with IPO13; may be implicated in SYNOP2 nuclear import. Interacts with ZYX, FLNC, ILK. Interacts with BAG3 (via WW 1 domain). May associate with the CASA complex consisting of HSPA8, HSPB8 and BAG3. Interacts with VPS18. In terms of processing, phosphorylated by PKA, and by CaMK2 at multiple sites. Dephosphorylated by calcineurin at Ser-558 and Thr-605; abrogating interaction with YWHAB and impairing nuclear import.

The protein resides in the nucleus. Its subcellular location is the cytoplasm. The protein localises to the cytoskeleton. It localises to the myofibril. It is found in the sarcomere. The protein resides in the z line. Its subcellular location is the cell junction. The protein localises to the focal adhesion. In terms of biological role, has an actin-binding and actin-bundling activity. Can induce the formation of F-actin networks. At the sarcomeric Z lines is proposed to act as adapter protein that links nascent myofibers to the sarcolemma via ZYX and may play a role in early assembly and stabilization of the Z lines. Involved in autophagosome formation. May play a role in chaperone-assisted selective autophagy (CASA) involved in Z lines maintenance in striated muscle under mechanical tension; may link the client-processing CASA chaperone machinery to a membrane-tethering and fusion complex providing autophagosome membranes. Involved in regulation of cell migration. May be a tumor suppressor. This is Synaptopodin-2 (Synpo2) from Rattus norvegicus (Rat).